Reading from the N-terminus, the 90-residue chain is Co-chaperonin GroES (90 aa).

Belongs to the GroES chaperonin family. Heptamer of 7 subunits arranged in a ring. Interacts with the chaperonin GroEL.

The protein localises to the cytoplasm. Its function is as follows. Together with the chaperonin GroEL, plays an essential role in assisting protein folding. The GroEL-GroES system forms a nano-cage that allows encapsulation of the non-native substrate proteins and provides a physical environment optimized to promote and accelerate protein folding. GroES binds to the apical surface of the GroEL ring, thereby capping the opening of the GroEL channel. This chain is Co-chaperonin GroES, found in Fusobacterium nucleatum subsp. polymorphum (Fusobacterium polymorphum).